Consider the following 352-residue polypeptide: Ubiquitin thioesterase otulin (352 aa).

The segment at 1–48 (MSRGTMPQPEAWPGASCAETPAREAAATARDGGKAAASGQPRPEMQCP) is disordered. Residues 18–37 (AETPAREAAATARDGGKAAA) show a composition bias toward low complexity. The short motif at 52-57 (EEDMYR) is the PIM motif element. Residue tyrosine 56 is modified to Phosphotyrosine. 2 linear diubiquitin binding regions span residues 95 to 96 (EW) and 124 to 126 (RGD). The region spanning 118–346 (TSIRRVRGDN…DRHYNIPVRV (229 aa)) is the OTU domain. Aspartate 126 is an active-site residue. Cysteine 129 functions as the Nucleophile in the catalytic mechanism. 3 linear diubiquitin binding regions span residues 255-259 (FFSVL), 283-289 (TGGLEQV), and 336-338 (DDR). The active site involves histidine 339.

It belongs to the peptidase C65 family. Otulin subfamily. As to quaternary structure, interacts (via the PUB domain) with RNF31 (via the PIM motif); the interaction is direct. Interacts with DVL2. Ubiquitinated. In terms of processing, acetylated. Post-translationally, phosphorylated. Phosphorylation at Tyr-56 prevents interaction with RNF31; dephosphorylation promotes interaction with RNF31 and the LUBAC complex.

The protein resides in the cytoplasm. The catalysed reaction is Thiol-dependent hydrolysis of ester, thioester, amide, peptide and isopeptide bonds formed by the C-terminal Gly of ubiquitin (a 76-residue protein attached to proteins as an intracellular targeting signal).. Functionally, deubiquitinase that specifically removes linear ('Met-1'-linked) polyubiquitin chains to substrates and acts as a regulator of angiogenesis and innate immune response. Required during angiogenesis, craniofacial and neuronal development by regulating the canonical Wnt signaling together with the LUBAC complex. Acts as a negative regulator of NF-kappa-B by regulating the activity of the LUBAC complex. OTULIN function is mainly restricted to homeostasis of the LUBAC complex: acts by removing 'Met-1'-linked autoubiquitination of the LUBAC complex, thereby preventing inactivation of the LUBAC complex. Acts as a key negative regulator of inflammation by restricting spontaneous inflammation and maintaining immune homeostasis. In myeloid cell, required to prevent unwarranted secretion of cytokines leading to inflammation and autoimmunity by restricting linear polyubiquitin formation. Plays a role in innate immune response by restricting linear polyubiquitin formation on LUBAC complex in response to NOD2 stimulation, probably to limit NOD2-dependent pro-inflammatory signaling. This chain is Ubiquitin thioesterase otulin, found in Homo sapiens (Human).